The following is a 429-amino-acid chain: Protein FAM98B (429 aa).

Positions 304–429 (RVPDRGGRPN…GGGGGGYRRY (126 aa)) are disordered. Over residues 305-314 (VPDRGGRPNE) the composition is skewed to basic and acidic residues. Positions 332-429 (GGRGGWGGGG…GGGGGGYRRY (98 aa)) are enriched in gly residues.

This sequence belongs to the FAM98 family. As to quaternary structure, homodimer. Component of a tRNA-splicing ligase complex. Interacts with FAM98A.

The protein localises to the nucleus. Its subcellular location is the cytoplasm. Positively stimulates PRMT1-induced protein arginine dimethylated arginine methylation. This Mus musculus (Mouse) protein is Protein FAM98B (Fam98b).